Reading from the N-terminus, the 219-residue chain is Ribonuclease HII (219 aa).

The RNase H type-2 domain occupies 22-219; that stretch reads GLVAGVDEVG…LLAMRMEAVV (198 aa). Residues D28, E29, and D125 each coordinate a divalent metal cation.

It belongs to the RNase HII family. The cofactor is Mn(2+). Mg(2+) is required as a cofactor.

The protein resides in the cytoplasm. The enzyme catalyses Endonucleolytic cleavage to 5'-phosphomonoester.. Its function is as follows. Endonuclease that specifically degrades the RNA of RNA-DNA hybrids. The polypeptide is Ribonuclease HII (Granulibacter bethesdensis (strain ATCC BAA-1260 / CGDNIH1)).